The following is a 33-amino-acid chain: DCLGFMKPCDINNDKCCSSYVCGRNNHWCKFHL.

Intrachain disulfides connect C2-C17, C9-C22, and C16-C29.

It belongs to the neurotoxin 10 (Hwtx-1) family. 59 (Tltx) subfamily. Expressed by the venom gland.

It is found in the secreted. Gating-modifier toxin that inhibits both sodium (Nav) and calcium (Cav3) channels by inducing hyperpolarizing shift in voltage-dependence of activation and steady state inactivation. Inhibits Nav1.1/SCN1A, Nav1.2/SCN2A, Nav1.6/SCN6A, Nav1.7/SCN9A and Cav3.1/CACNA1G sodium and calcium channels at nanomolar concentrations (IC(50)=169-621 nM). Surprisingly, selectively slows fast inactivation of Nav1.3/SCN3A. Also shows moderate inhibition of Nav1.3/SCN3A sodium channels (IC(50)=1216 nM). This chain is Mu/omega-theraphotoxin-Tap2a, found in Theraphosa apophysis (Goliath pinkfoot tarantula).